A 37-amino-acid polypeptide reads, in one-letter code: Large ribosomal subunit protein bL36 (37 aa).

This sequence belongs to the bacterial ribosomal protein bL36 family.

The chain is Large ribosomal subunit protein bL36 from Beutenbergia cavernae (strain ATCC BAA-8 / DSM 12333 / CCUG 43141 / JCM 11478 / NBRC 16432 / NCIMB 13614 / HKI 0122).